The chain runs to 405 residues: Putative polysaccharide ligase RT0347 (405 aa).

10 helical membrane passes run 23-43 (IAATVLFFLLIIVITELISFI), 77-97 (LFIAWCFISCLFTIHPINSLV), 120-140 (ILYLKNSLILGIITAILLFFI), 156-178 (FGLYMLDRGCALLSITTWVVIII), 201-221 (ISDSLASFVGFSIGGIIFILA), 227-247 (IFFKLITISLITGSLLFPIIA), 270-290 (LFIWHFVANKIIIKPILGYGF), 322-342 (ILQITLELGILGLALFLCLVY), 353-375 (ISNFRAASYSCFINYYIIGMISY), and 377-397 (IWQTWWILSGIWILVLMKLLV).

It belongs to the O-antigen ligase family.

The protein localises to the membrane. In Rickettsia typhi (strain ATCC VR-144 / Wilmington), this protein is Putative polysaccharide ligase RT0347.